We begin with the raw amino-acid sequence, 294 residues long: tRNA dimethylallyltransferase (294 aa).

10–17 (GPTAVGKT) lines the ATP pocket. A substrate-binding site is contributed by 12-17 (TAVGKT). Positions 35 to 38 (DSQQ) are interaction with substrate tRNA.

The protein belongs to the IPP transferase family. As to quaternary structure, monomer. It depends on Mg(2+) as a cofactor.

The catalysed reaction is adenosine(37) in tRNA + dimethylallyl diphosphate = N(6)-dimethylallyladenosine(37) in tRNA + diphosphate. Functionally, catalyzes the transfer of a dimethylallyl group onto the adenine at position 37 in tRNAs that read codons beginning with uridine, leading to the formation of N6-(dimethylallyl)adenosine (i(6)A). This chain is tRNA dimethylallyltransferase, found in Streptococcus pneumoniae (strain P1031).